Consider the following 467-residue polypeptide: MLSTKTLPSSKAQESLQSPTKGSYWITTFGCQMNKADSERMAGILERMGYKQAEEELQADLVLYNTCTIRDNAEQKVYSYLGRQALRKKLFPQLKLIVAGCVAQQEGESLLRRVPELDLVMGPQHANRLETLLNKVETGQQVLATEELYIIEDLTTARRDSSICAWVNVIYGCNERCTYCVVPSVRGKEQSRTPPAIKREIENLANTGFKEVTLLGQNIDAYGRDLPGTTPQGRKKNTLTDLLYYIHDIEGIERIRFATSHPRYFTSRLIEACAELPKVCEHFHIPFQSGDDEILNQMRRGYKIKTYKKIIGRIRELMPNASITADVIVAFPGETNEQFQRSLSLVEEIGFDQLNTAAYSPRPNTPAALWPNQIPEEIKIERLRKLNSLVEIKAKERNVRYKDRVEEVLAENTNPKDKQQLMGRTRTNRLTFFPKVDNQGNSYKPGDLVKVRVKDIRAFSLSGVIEN.

An MTTase N-terminal domain is found at 22–138 (GSYWITTFGC…LETLLNKVET (117 aa)). Residues Cys31, Cys67, Cys101, Cys173, Cys177, and Cys180 each contribute to the [4Fe-4S] cluster site. In terms of domain architecture, Radical SAM core spans 159 to 396 (RDSSICAWVN…NSLVEIKAKE (238 aa)). The TRAM domain maps to 399-467 (VRYKDRVEEV…AFSLSGVIEN (69 aa)).

This sequence belongs to the methylthiotransferase family. MiaB subfamily. Monomer. It depends on [4Fe-4S] cluster as a cofactor.

It is found in the cytoplasm. The catalysed reaction is N(6)-dimethylallyladenosine(37) in tRNA + (sulfur carrier)-SH + AH2 + 2 S-adenosyl-L-methionine = 2-methylsulfanyl-N(6)-dimethylallyladenosine(37) in tRNA + (sulfur carrier)-H + 5'-deoxyadenosine + L-methionine + A + S-adenosyl-L-homocysteine + 2 H(+). Its function is as follows. Catalyzes the methylthiolation of N6-(dimethylallyl)adenosine (i(6)A), leading to the formation of 2-methylthio-N6-(dimethylallyl)adenosine (ms(2)i(6)A) at position 37 in tRNAs that read codons beginning with uridine. The protein is tRNA-2-methylthio-N(6)-dimethylallyladenosine synthase of Prochlorococcus marinus (strain MIT 9211).